We begin with the raw amino-acid sequence, 293 residues long: 4-hydroxy-tetrahydrodipicolinate synthase (293 aa).

Residue Thr51 participates in pyruvate binding. Residue Tyr140 is the Proton donor/acceptor of the active site. The active-site Schiff-base intermediate with substrate is Lys168. Ile209 lines the pyruvate pocket.

The protein belongs to the DapA family. Homotetramer; dimer of dimers.

The protein resides in the cytoplasm. The catalysed reaction is L-aspartate 4-semialdehyde + pyruvate = (2S,4S)-4-hydroxy-2,3,4,5-tetrahydrodipicolinate + H2O + H(+). The protein operates within amino-acid biosynthesis; L-lysine biosynthesis via DAP pathway; (S)-tetrahydrodipicolinate from L-aspartate: step 3/4. Its function is as follows. Catalyzes the condensation of (S)-aspartate-beta-semialdehyde [(S)-ASA] and pyruvate to 4-hydroxy-tetrahydrodipicolinate (HTPA). The polypeptide is 4-hydroxy-tetrahydrodipicolinate synthase (Streptococcus mutans serotype c (strain ATCC 700610 / UA159)).